The chain runs to 97 residues: Acylphosphatase (97 aa).

Residues Thr-9 to Glu-95 enclose the Acylphosphatase-like domain. Catalysis depends on residues Arg-24 and Asn-42.

This sequence belongs to the acylphosphatase family.

The enzyme catalyses an acyl phosphate + H2O = a carboxylate + phosphate + H(+). This is Acylphosphatase (acyP) from Acidovorax sp. (strain JS42).